The primary structure comprises 128 residues: UPF0325 protein YaeH (128 aa).

Belongs to the UPF0325 family.

This Escherichia fergusonii (strain ATCC 35469 / DSM 13698 / CCUG 18766 / IAM 14443 / JCM 21226 / LMG 7866 / NBRC 102419 / NCTC 12128 / CDC 0568-73) protein is UPF0325 protein YaeH.